A 568-amino-acid polypeptide reads, in one-letter code: Acyl-CoA ligase gloD (568 aa).

Residues 211–219 (TSGTSGFLK), 352–357 (PGYGLT), D436, R455, and K553 each bind ATP. The SBD1 stretch occupies residues 282-352 (DMQIALKSVQ…QLCPEWEINP (71 aa)). An SBD2 region spans residues 353-415 (GYGLTESFVC…VRSPSVMKEY (63 aa)).

This sequence belongs to the ATP-dependent AMP-binding enzyme family.

Its pathway is mycotoxin biosynthesis. Acyl-CoA ligase; part of the gene cluster that mediates the biosynthesis of pneumocandins, lipohexapeptides of the echinocandin family that prevent fungal cell wall formation by non-competitive inhibition of beta-1,3-glucan synthase. The 10,12-dimethylmyristoyl side chain is synthesized by the reducing polyketide synthase gloL/GLPKS4. The thioesterase gloN/GLHYD exclusively interacts with gloL/GLPKS4 to maintain turnover of the polyketide side chain. The 10R,12S-dimethylmyristic acid is then transferred to the first thiolation domain of the nonribosomal peptide synthetase gloA/GLNRPS4 by the acyl-AMP ligase gloD/GLligase, followed by its acylation to L-ornithine to trigger elongation of the cyclic hexapeptide. L-ornithine, 4R-hydroxyl-L-proline (generated from L-proline by the dioxygenase gloF/GLOXY2), 3S-hydroxyl-L-homotyrosine (generated by gloG/GLHtyB, gloH/GLHtyA, gloI/GLHtyC, gloJ/GLHtyD and hydroxylated at C-3 by the dioxygenase gloM/GLOXY1), 3R-hydroxyl-L-glutamine (generated from L-glutamine probably by the dioxygenase gloE/GLOXY3) and 3S-hydroxyl-L-proline (generated from L-proline by the dioxygenase gloF/GLOXY2 to yield pneumocandin B0), or 3S-hydroxyl-4S-methyl-L-proline (generated from L-leucine by the dioxygenase gloC/GLOXY4 to yield pneumocandin A0) are sequentially added to the growing chain. The last C domain of gloA/GLNRPS4 is proposed to be responsible for cyclization by condensation to form the peptide bond between L-ornithine and 3S-hydroxyl-4S-methyl-L-proline (for pneumocandin A0) or 3S-hydroxyl-L-proline (for pneumocandin B0). Finally, the subsequent C-4 hydroxylation of 3S-hydroxyl-L-homotyrosine and L-ornithine dihydroxylation at C-4 and C-5 are performed by the cytochrome P450 monooxygenases gloP/GLP450-1 and gloO/GLP450-2, respectively. The polypeptide is Acyl-CoA ligase gloD (Glarea lozoyensis (strain ATCC 20868 / MF5171)).